The sequence spans 440 residues: Serine hydroxymethyltransferase (440 aa).

123-125 (GHI) provides a ligand contact to (6S)-5,6,7,8-tetrahydrofolate. Lys238 carries the N6-(pyridoxal phosphate)lysine modification.

This sequence belongs to the SHMT family. As to quaternary structure, homodimer. Pyridoxal 5'-phosphate is required as a cofactor.

It is found in the cytoplasm. It functions in the pathway amino-acid biosynthesis; glycine biosynthesis; glycine from L-serine: step 1/1. Catalyzes the reversible interconversion of serine and glycine with a modified folate serving as the one-carbon carrier. Also exhibits a pteridine-independent aldolase activity toward beta-hydroxyamino acids, producing glycine and aldehydes, via a retro-aldol mechanism. This Nitrosopumilus maritimus (strain SCM1) protein is Serine hydroxymethyltransferase.